Reading from the N-terminus, the 370-residue chain is F-box protein At1g66490 (370 aa).

In terms of domain architecture, F-box spans 1–46; sequence MRTISDLPVALVEEILSRVPLTSLSAVRSTCKTWNALSKTQIFGKT.

The polypeptide is F-box protein At1g66490 (Arabidopsis thaliana (Mouse-ear cress)).